A 478-amino-acid chain; its full sequence is Glutamate--tRNA ligase (478 aa).

The 'HIGH' region signature appears at 9–19 (PSPTGLLHIGT). Residues 248-252 (KLSKR) carry the 'KMSKS' region motif. K251 contributes to the ATP binding site.

The protein belongs to the class-I aminoacyl-tRNA synthetase family. Glutamate--tRNA ligase type 1 subfamily. In terms of assembly, monomer.

The protein localises to the cytoplasm. It catalyses the reaction tRNA(Glu) + L-glutamate + ATP = L-glutamyl-tRNA(Glu) + AMP + diphosphate. Functionally, catalyzes the attachment of glutamate to tRNA(Glu) in a two-step reaction: glutamate is first activated by ATP to form Glu-AMP and then transferred to the acceptor end of tRNA(Glu). This Prochlorococcus marinus (strain MIT 9515) protein is Glutamate--tRNA ligase.